The following is a 442-amino-acid chain: uncharacterized protein (442 aa).

Positions 1–238 constitute an ABC transporter domain; it reads MKAEGLSGGY…QSIKAVYDTD (238 aa). 33–40 is an ATP binding site; it reads GPNGSGKT.

It belongs to the ABC transporter superfamily. The complex is composed of two ATP-binding proteins (YvrA), two transmembrane proteins (YvrB) and a solute-binding protein (YvrC).

Functionally, probably part of an ABC transporter complex. Probably responsible for energy coupling to the transport system. This is an uncharacterized protein from Bacillus subtilis (strain 168).